A 123-amino-acid polypeptide reads, in one-letter code: N(4)-acetylcytidine amidohydrolase (123 aa).

Positions 6-101 (ITFYQRFEAD…EIIFWVIQFS (96 aa)) constitute an ASCH domain. K21 (proton acceptor) is an active-site residue. Catalysis depends on S24, which acts as the Nucleophile. E74 serves as the catalytic Proton donor.

The protein belongs to the N(4)-acetylcytidine amidohydrolase family.

It catalyses the reaction N(4)-acetylcytidine + H2O = cytidine + acetate + H(+). It carries out the reaction N(4)-acetyl-2'-deoxycytidine + H2O = 2'-deoxycytidine + acetate + H(+). The catalysed reaction is N(4)-acetylcytosine + H2O = cytosine + acetate + H(+). Its function is as follows. Catalyzes the hydrolysis of N(4)-acetylcytidine (ac4C). The polypeptide is N(4)-acetylcytidine amidohydrolase (Haemophilus influenzae (strain ATCC 51907 / DSM 11121 / KW20 / Rd)).